The primary structure comprises 259 residues: 14-3-3-like protein (259 aa).

A disordered region spans residues 238–259 (MQDPAAGDDREGADMKVEDAEP). The segment covering 244–259 (GDDREGADMKVEDAEP) has biased composition (basic and acidic residues).

Belongs to the 14-3-3 family.

In Chlamydomonas reinhardtii (Chlamydomonas smithii), this protein is 14-3-3-like protein.